Consider the following 259-residue polypeptide: Imidazole glycerol phosphate synthase subunit HisF (259 aa).

Catalysis depends on residues Asp11 and Asp130.

The protein belongs to the HisA/HisF family. As to quaternary structure, heterodimer of HisH and HisF.

It is found in the cytoplasm. The enzyme catalyses 5-[(5-phospho-1-deoxy-D-ribulos-1-ylimino)methylamino]-1-(5-phospho-beta-D-ribosyl)imidazole-4-carboxamide + L-glutamine = D-erythro-1-(imidazol-4-yl)glycerol 3-phosphate + 5-amino-1-(5-phospho-beta-D-ribosyl)imidazole-4-carboxamide + L-glutamate + H(+). The protein operates within amino-acid biosynthesis; L-histidine biosynthesis; L-histidine from 5-phospho-alpha-D-ribose 1-diphosphate: step 5/9. In terms of biological role, IGPS catalyzes the conversion of PRFAR and glutamine to IGP, AICAR and glutamate. The HisF subunit catalyzes the cyclization activity that produces IGP and AICAR from PRFAR using the ammonia provided by the HisH subunit. In Carboxydothermus hydrogenoformans (strain ATCC BAA-161 / DSM 6008 / Z-2901), this protein is Imidazole glycerol phosphate synthase subunit HisF.